The chain runs to 397 residues: T-box transcription factor TBX19 (397 aa).

A DNA-binding region (T-box) is located at residues 48 to 216 (LWQRFREVTN…YNPFAKAFLD (169 aa)). Positions 220 to 248 (RNHPKDAPEAASEGQHMTYSHSPQAPHGC) are disordered.

The protein resides in the nucleus. May be involved in the initial formation of the chordamesoderm. The protein is T-box transcription factor TBX19 of Gallus gallus (Chicken).